The following is a 702-amino-acid chain: MNPIVKSFEYGQHTVTLETGVIARQANAAVLASMGDTTVLVTVVGKKAEDVGRDFFPLTVNYQEKTYAAGKIPGGFFKREGRPSENETLIARLIDRPIRPLFPNGFKNEVQVIITVVSVDPEINPDVISMIGTSAALSISDLPFNGPLGVARVGYTNGEYVLNPNVSQLAESDLDLVVAGTQGAVLMVESEAASLPEEVMLGGVVYGHDQQQVVINAINELTAEAGKTKWDWTAPAEDTDLVEKIKGLAEAELTNAYQIADKHERRDAVIALKNAAVAKLVEENADVDLREVDKLLGSLEKKVVRSRIISGSPRIDGREPDMVRALNVMAGVLPRTHGSSLFTRGETQALVTCTLGTERDAQKVDSIMGEYTNRFMLHYNFPPYSVGETGMVGSPKRREIGHGKLAWRGINAVMPTAEEFPYSVRVVSEITESNGSSSMASVCGTSLALMDAGVPIKTSVAGIAMGLVKEGDDFVVLSDILGDEDHLGDMDFKVAGTRDGITALQMDIKIEGITKEIMQIALQQAYGARVHILNVMDQAISGHREDISDHAPRITTLKINPEKIRDVIGKGGATIRALTEETGTTIELEDDGTVKIASANGEATKEAIRRIEEITAEVEVGTVYNGKVVRIVDFGAFVTILPGKDGLVHISQIAEERVANVSDYLQVGQEVKVKVMEVDRQGRVRLSMKEAQPKAEAAPAAE.

Mg(2+) is bound by residues Asp-485 and Asp-491. Residues 552-611 (PRITTLKINPEKIRDVIGKGGATIRALTEETGTTIELEDDGTVKIASANGEATKEAIRRI) enclose the KH domain. The S1 motif domain occupies 621–689 (GTVYNGKVVR…RQGRVRLSMK (69 aa)).

It belongs to the polyribonucleotide nucleotidyltransferase family. In terms of assembly, component of the RNA degradosome, which is a multiprotein complex involved in RNA processing and mRNA degradation. It depends on Mg(2+) as a cofactor.

It is found in the cytoplasm. The catalysed reaction is RNA(n+1) + phosphate = RNA(n) + a ribonucleoside 5'-diphosphate. Its function is as follows. Involved in mRNA degradation. Catalyzes the phosphorolysis of single-stranded polyribonucleotides processively in the 3'- to 5'-direction. The polypeptide is Polyribonucleotide nucleotidyltransferase (Shewanella woodyi (strain ATCC 51908 / MS32)).